The primary structure comprises 304 residues: NAD kinase (304 aa).

The active-site Proton acceptor is aspartate 77. NAD(+) contacts are provided by residues 77–78, arginine 82, 151–152, arginine 162, aspartate 181, and 192–197; these read DG, NE, and TAYSFS.

This sequence belongs to the NAD kinase family. The cofactor is a divalent metal cation.

It localises to the cytoplasm. It catalyses the reaction NAD(+) + ATP = ADP + NADP(+) + H(+). Involved in the regulation of the intracellular balance of NAD and NADP, and is a key enzyme in the biosynthesis of NADP. Catalyzes specifically the phosphorylation on 2'-hydroxyl of the adenosine moiety of NAD to yield NADP. The protein is NAD kinase of Leifsonia xyli subsp. xyli (strain CTCB07).